A 119-amino-acid chain; its full sequence is Large ribosomal subunit protein uL22 (119 aa).

It belongs to the universal ribosomal protein uL22 family. In terms of assembly, part of the 50S ribosomal subunit.

This protein binds specifically to 23S rRNA; its binding is stimulated by other ribosomal proteins, e.g. L4, L17, and L20. It is important during the early stages of 50S assembly. It makes multiple contacts with different domains of the 23S rRNA in the assembled 50S subunit and ribosome. Its function is as follows. The globular domain of the protein is located near the polypeptide exit tunnel on the outside of the subunit, while an extended beta-hairpin is found that lines the wall of the exit tunnel in the center of the 70S ribosome. The chain is Large ribosomal subunit protein uL22 from Bifidobacterium adolescentis (strain ATCC 15703 / DSM 20083 / NCTC 11814 / E194a).